The following is a 1357-amino-acid chain: DNA-directed RNA polymerase subunit beta (1357 aa).

This sequence belongs to the RNA polymerase beta chain family. The RNAP catalytic core consists of 2 alpha, 1 beta, 1 beta' and 1 omega subunit. When a sigma factor is associated with the core the holoenzyme is formed, which can initiate transcription.

It carries out the reaction RNA(n) + a ribonucleoside 5'-triphosphate = RNA(n+1) + diphosphate. DNA-dependent RNA polymerase catalyzes the transcription of DNA into RNA using the four ribonucleoside triphosphates as substrates. The chain is DNA-directed RNA polymerase subunit beta from Neorickettsia sennetsu (Ehrlichia sennetsu).